The primary structure comprises 448 residues: Putative carbonic anhydrase 2 (448 aa).

In terms of domain architecture, Alpha-carbonic anhydrase spans 1-222 (AYRQTENLLY…PAERDVFRII (222 aa)). H19 lines the Zn(2+) pocket. N-linked (GlcNAc...) asparagine glycans are attached at residues N139 and N198. Positions 229-448 (RREEDDERGD…DKGDDKGDDN (220 aa)) are disordered. Over residues 245 to 280 (DDDDNYDDDDYYNDDYSNDDYYDDDYYYDDYDDDTD) the composition is skewed to acidic residues. Composition is skewed to basic and acidic residues over residues 281-334 (DDHK…DDSG) and 342-354 (RDGRGNGDSRDRN). N314 is a glycosylation site (N-linked (GlcNAc...) asparagine). Residues 357-368 (NGNGRENGGVRG) show a composition bias toward gly residues. A compositionally biased stretch (basic and acidic residues) spans 370–379 (GNDRDGRRDN). N-linked (GlcNAc...) asparagine glycosylation occurs at N385. A compositionally biased stretch (basic and acidic residues) spans 386 to 421 (GTRRGNGDDRGGRRNEDRGENRRGKDDQERESEDGR). Residues 422 to 435 (RRRRRFNGRRRRRG) are compositionally biased toward basic residues. The segment covering 436 to 448 (RGDDKGDDKGDDN) has biased composition (basic and acidic residues).

It belongs to the alpha-carbonic anhydrase family. As to expression, component of the acid-insoluble and acid-soluble organic matrix of calcified layers of the shell (at protein level).

The protein localises to the secreted. It carries out the reaction hydrogencarbonate + H(+) = CO2 + H2O. Functionally, reversible hydration of carbon dioxide. This Lottia gigantea (Giant owl limpet) protein is Putative carbonic anhydrase 2.